A 229-amino-acid polypeptide reads, in one-letter code: ATP synthase subunit a (229 aa).

Transmembrane regions (helical) follow at residues 25-45, 82-102, 104-124, 142-162, 181-201, and 202-222; these read ADAV…SIAA, FFPL…IGLI, GFFP…VVFV, FLGP…IGHL, LVLI…MMLM, and GVLV…IYIQ.

This sequence belongs to the ATPase A chain family. As to quaternary structure, F-type ATPases have 2 components, CF(1) - the catalytic core - and CF(0) - the membrane proton channel. CF(1) has five subunits: alpha(3), beta(3), gamma(1), delta(1), epsilon(1). CF(0) has three main subunits: a(1), b(2) and c(9-12). The alpha and beta chains form an alternating ring which encloses part of the gamma chain. CF(1) is attached to CF(0) by a central stalk formed by the gamma and epsilon chains, while a peripheral stalk is formed by the delta and b chains.

The protein localises to the cell inner membrane. In terms of biological role, key component of the proton channel; it plays a direct role in the translocation of protons across the membrane. This chain is ATP synthase subunit a, found in Geobacter sp. (strain M21).